The primary structure comprises 329 residues: Vomeronasal type-1 receptor 42 (329 aa).

Over 1-32 (MGDILFSSPQSMFSHTMNKNSILHTHSIIGKT) the chain is Extracellular. Residues 33-53 (FFSEIGIGISGNSFLLLVHIL) traverse the membrane as a helical segment. Residues 54–65 (KFIRGHRPRLTD) lie on the Cytoplasmic side of the membrane. The helical transmembrane segment at 66 to 86 (LPIGLLSLIHLLMLLVAAFIA) threads the bilayer. Residues 87–109 (TDIFISRRGWDDIICKFLVYLYR) are Extracellular-facing. Residues Cys101 and Cys188 are joined by a disulfide bond. A helical membrane pass occupies residues 110–130 (VLRGFSLCTTSMLSILQAIIL). Over 131 to 150 (SPRSSCLAKFKHISPHHISG) the chain is Cytoplasmic. Residues 151–171 (AILFLSVLYMLIGSQLLVSII) form a helical membrane-spanning segment. Topologically, residues 172 to 209 (ATPNLTMNDFIYVTQSCSILPLSYLMQSIYSTLLAIRE) are extracellular. Asn175 carries N-linked (GlcNAc...) asparagine glycosylation. The chain crosses the membrane as a helical span at residues 210–230 (FFLISLMVLSNWYMVALLSMH). Residues 231–254 (RKQTQHLHGTNLSPKKSPEQSATQ) are Cytoplasmic-facing. A helical membrane pass occupies residues 255-275 (TILMLISFFLLMTIYDTIVSC). The Extracellular segment spans residues 276–285 (SRTMFLNDPT). Residues 286 to 306 (SYSIELFIMHIYATVSPFVFM) traverse the membrane as a helical segment. The Cytoplasmic segment spans residues 307–329 (STEKHIVNFLRSLGKRVINFNLH).

This sequence belongs to the G-protein coupled receptor 1 family.

The protein localises to the cell membrane. In terms of biological role, putative pheromone receptor implicated in the regulation of social and reproductive behavior. The sequence is that of Vomeronasal type-1 receptor 42 (Vmn1r42) from Mus musculus (Mouse).